A 214-amino-acid polypeptide reads, in one-letter code: Probable transaldolase (214 aa).

Catalysis depends on lysine 83, which acts as the Schiff-base intermediate with substrate.

Belongs to the transaldolase family. Type 3B subfamily.

The protein localises to the cytoplasm. The catalysed reaction is D-sedoheptulose 7-phosphate + D-glyceraldehyde 3-phosphate = D-erythrose 4-phosphate + beta-D-fructose 6-phosphate. It participates in carbohydrate degradation; pentose phosphate pathway; D-glyceraldehyde 3-phosphate and beta-D-fructose 6-phosphate from D-ribose 5-phosphate and D-xylulose 5-phosphate (non-oxidative stage): step 2/3. In terms of biological role, transaldolase is important for the balance of metabolites in the pentose-phosphate pathway. This Leptospira interrogans serogroup Icterohaemorrhagiae serovar copenhageni (strain Fiocruz L1-130) protein is Probable transaldolase.